An 815-amino-acid chain; its full sequence is MEPRTDGAECGVQVFCRIRPLNKTEEKNADRFLPKFPSEDSISLGGKVYVFDKVFKPNTTQEQVYKGAAYHIVQDVLSGYNGTVFAYGQTSSGKTHTMEGVIGDNGLSGIIPRIVADIFNHIYSMDENLQFHIKVSYYEIYNEKIRDLLDPEKVNLSIHEDKNRVPYVKGATERFVGGPDEVLQAIEDGKSNRMVAVTNMNEHSSRSHSVFLITVKQEHQTTKKQLTGKLYLVDLAGSEKVSKTGAQGTVLEEAKNINKSLTALGIVISALAEGTKSHVPYRDSKLTRILQESLGGNSRTTVIICASPSHFNEAETKSTLLFGARAKTIKNVVQINEELTAEEWKRRYEKEKEKNTRLAALLQAAALELSRWRAGESVSEVEWVNLSDSAQMAVSEVSGGSTPLMERSIAPAPPMLTSTTGPITDEEKKKYEEERVKLYQQLDEKDDEIQKVSQELEKLRQQVLLQEEALGTMRENEELIREENNRFQKEAEDKQQEGKEMMTALEEIAVNLDVRQAECEKLKRELEVVQEDNQSLEDRMNQATSLLNAHLDECGPKIRHFKEGIYNVIREFNIADIASQNDQLPDHDLLNHVRIGVSKLFSEYSAAKESSTAAEHDAEAKLAADVARVESGQDAGRMKQLLVKDQAAKEIKPLTDRVNMELTTLKNLKKEFMRVLVARCQANQDTEGEDSLSGPAQKQRIQFLENNLDKLTKVHKQLVRDNADLRVELPKMEARLRGREDRIKILETALRDSKQRSQAERKKYQQEVERIKEAVRQRNMRRMNAPQIVKPIRPGQVYTSPSAGMSQGAPNGSNA.

In terms of domain architecture, Kinesin motor spans 11–329 (GVQVFCRIRP…LLFGARAKTI (319 aa)). 88-95 (GQTSSGKT) is an ATP binding site. Coiled-coil stretches lie at residues 335-374 (INEELTAEEWKRRYEKEKEKNTRLAALLQAAALELSRWRA), 422-554 (PITD…LDEC), and 695-785 (PAQK…RMNA). Residues 788-815 (IVKPIRPGQVYTSPSAGMSQGAPNGSNA) form a disordered region. The segment covering 797–815 (VYTSPSAGMSQGAPNGSNA) has biased composition (polar residues).

It belongs to the TRAFAC class myosin-kinesin ATPase superfamily. Kinesin family. Kinesin subfamily. Oligomer composed of two heavy chains and two light chains.

Its subcellular location is the cytoplasm. The protein resides in the cytoskeleton. Its function is as follows. Microtubule-dependent motor protein required for organelle transport. Plays a role in endosome transport. Required for the transport of mitochondria along the axon of motor neurons. Involved in the nuclear migration of hyp7 hypodermal precursor cells. Required for the formation of dendritic branches of PVD sensory neurons. In non-ciliated neurons such as the PVD and PHC neurons, required for the organization of minus-end out microtubules in dendrites. Also required for the minus-end out orientation of microtubules in dendrites of AQR gas-sensing neurons. Involved in the localization of unc-33 to neurites. Positively regulates cilium position and dendrite morphogenesis in the postembryonic AQR and PQR gas-sensing neurons. Plays a more prominent role in regulating dendrite morphogenesis in AQR than in PQR neurons. Plays a role in regulating the localization of grdn-1 to the distal dendrites of AQR sensory neurons. In Caenorhabditis elegans, this protein is Kinesin heavy chain.